The following is a 450-amino-acid chain: Phosphomethylpyrimidine synthase (450 aa).

Substrate-binding positions include N80, M109, Y138, H173, S193–G195, D234–R237, and E273. H277 is a binding site for Zn(2+). Y300 provides a ligand contact to substrate. H341 lines the Zn(2+) pocket. [4Fe-4S] cluster contacts are provided by C421, C424, and C429.

The protein belongs to the ThiC family. In terms of assembly, homodimer. Requires [4Fe-4S] cluster as cofactor.

The catalysed reaction is 5-amino-1-(5-phospho-beta-D-ribosyl)imidazole + S-adenosyl-L-methionine = 4-amino-2-methyl-5-(phosphooxymethyl)pyrimidine + CO + 5'-deoxyadenosine + formate + L-methionine + 3 H(+). It participates in cofactor biosynthesis; thiamine diphosphate biosynthesis. Functionally, catalyzes the synthesis of the hydroxymethylpyrimidine phosphate (HMP-P) moiety of thiamine from aminoimidazole ribotide (AIR) in a radical S-adenosyl-L-methionine (SAM)-dependent reaction. The sequence is that of Phosphomethylpyrimidine synthase from Campylobacter fetus subsp. fetus (strain 82-40).